The sequence spans 170 residues: Adenine phosphoribosyltransferase (170 aa).

The protein belongs to the purine/pyrimidine phosphoribosyltransferase family. As to quaternary structure, homodimer.

It is found in the cytoplasm. It catalyses the reaction AMP + diphosphate = 5-phospho-alpha-D-ribose 1-diphosphate + adenine. It participates in purine metabolism; AMP biosynthesis via salvage pathway; AMP from adenine: step 1/1. Catalyzes a salvage reaction resulting in the formation of AMP, that is energically less costly than de novo synthesis. The chain is Adenine phosphoribosyltransferase from Lactococcus lactis subsp. cremoris (strain SK11).